Consider the following 393-residue polypeptide: Staphopain B (393 aa).

A signal peptide spans 1 to 36 (MNSSCKTRVFNIISIIMVSMLILSLGAFANNNKAKA). The propeptide occupies 37–219 (DSHSKQLEIN…KVEENEAIQE (183 aa)). Catalysis depends on residues Cys243, His340, and Asn360.

This sequence belongs to the peptidase C47 family. In terms of assembly, in the cytoplasm, prematurely activated/folded SspB forms a stable non-covalent complex with SspC. Post-translationally, proteolytically cleaved by staphylococcal serine protease (SspA).

It localises to the secreted. Prematurely activated/folded staphopain B is inhibited by staphostatin B (SspC), which is probably required to protect staphylococcal cytoplasmic proteins from degradation by SspB. Functionally, cysteine protease that plays an important role in the inhibition of host innate immune response. Degrades host elastin, fibrogen, fibronectin and kininogen. Blocks phagocytosis of opsonised S.aureus by neutrophils and monocytes by inducing their death in a proteolytic activity-dependent manner. Decreases surface expression of the 'don't eat me' signal CD31 on neutrophils. Cleaves host galectin-3/LGALS3, thereby inhibiting the neutrophil-activating ability of the lectin. In Staphylococcus aureus (strain MRSA252), this protein is Staphopain B (sspB).